The following is a 213-amino-acid chain: HTH-type transcriptional regulator SrpR (213 aa).

One can recognise an HTH tetR-type domain in the interval Glu-10–Leu-70. Positions Thr-33–Phe-52 form a DNA-binding region, H-T-H motif.

Functionally, in conjunction with SrpS represses the srpABC operon. This is HTH-type transcriptional regulator SrpR (srpR) from Pseudomonas putida (Arthrobacter siderocapsulatus).